A 487-amino-acid polypeptide reads, in one-letter code: MQDAERTTNDPVDRIEKVTWRDLQDGSFTAELKRLICFAAPMAAVVIIQFMIQIISMVMVGHLGRLSLASASFAVSFCNVTGFSFIIGLSCALDTLSGQAYGAKLYRKLGVQAYTAMFCLTLVCLPLSLLWFNMGKLIVILGQDPAIAHEAGRYAAWLIPGLFAYAVLQPLIRYFKNQSLITPLLVTSSVVFCIHVPLCWLLVYKSGLGHIGGALALSLSYWLYAIFLGSFMYYSSACSETRAPLTMEIFEGVREFIKYALPSAAMLCLEWWSYELIILLSGLLPNPQLETSVLSICFETLSITYSIPLAIAAAASTRISNELGAGNSRAAHIVVYAAMSLAVMDALMVSMSLLAGRHVFGHVFSSDKKTIEYVAKMAPLVSISIILDSLQGVLSGVASGCGWQHIGAYINFGAFYLWGIPIAASLAFWVHLKGVGLWIGILAGAVLQTLLLALVTGCTNWKTQAREARERMAVAHESELTESELPI.

Helical transmembrane passes span Leu35–Ile55, Phe73–Leu93, Leu122–Gly142, Ala155–Phe175, Leu184–Tyr204, Ile211–Phe231, Ala264–Leu284, Val293–Ala313, Ile333–Leu353, Met377–Val397, Phe412–Leu432, and Val435–Val455.

Belongs to the multi antimicrobial extrusion (MATE) (TC 2.A.66.1) family.

The protein localises to the membrane. This Arabidopsis thaliana (Mouse-ear cress) protein is Protein DETOXIFICATION 10.